Reading from the N-terminus, the 772-residue chain is Bromo adjacent homology domain-containing 1 protein (772 aa).

Disordered stretches follow at residues 1–63 (MTHT…RSLV) and 77–117 (LENV…PRKR). Position 8 is a phosphoserine (S8). Over residues 49-61 (TGRRKNYPLRKRS) the composition is skewed to basic residues. 2 positions are modified to phosphoserine: S101 and S121. Disordered stretches follow at residues 131–357 (LLER…PADY), 521–582 (QTVA…RTNG), and 723–743 (PSRK…PHRT). Composition is skewed to basic and acidic residues over residues 147–158 (RGGDPHRSRDRA), 170–182 (RLGD…RDLS), and 189–199 (EGARRDGDPAP). Position 182 is a phosphoserine (S182). Residue S204 is modified to Phosphoserine. A compositionally biased stretch (pro residues) spans 280-289 (SAPPHGPPTQ). The segment covering 299–310 (LENPLRPNLPLL) has biased composition (low complexity). Positions 340–352 (FPAPQLSPLPMPG) are enriched in pro residues. The segment covering 536 to 548 (GSKSGLRTGSSCR) has biased composition (polar residues). Basic residues predominate over residues 549–580 (HTVRSKAARRPSHPKQPRAQRPRPRRRRRRRT). Residue T580 is modified to Phosphothreonine. Residues 616–771 (ETIRVRDTVL…FRHGRILKNP (156 aa)) enclose the BAH domain.

As to quaternary structure, interacts with CBX5 (HP1 alpha), HDAC5, MBD1 and SP1. Post-translationally, ubiquitinated in a FBXO11-dependent manner; leading to degradation.

Its subcellular location is the nucleus. It is found in the chromosome. In terms of biological role, heterochromatin protein that acts as a transcription repressor and has the ability to promote the formation of large heterochromatic domains. May act by recruiting heterochromatin proteins such as CBX5 (HP1 alpha), HDAC5 and MBD1. Represses IGF2 expression by binding to its CpG-rich P3 promoter and recruiting heterochromatin proteins. The polypeptide is Bromo adjacent homology domain-containing 1 protein (Bahd1) (Mus musculus (Mouse)).